Reading from the N-terminus, the 357-residue chain is Transcription factor HHO1 (357 aa).

2 disordered regions span residues 94 to 117 and 171 to 198; these read TSIEEEVDDKDDDDEEHQSHETDI and NNNIKSPVTTSDGGSGGGGGRRGQRKNR. Residues 96–109 show a composition bias toward acidic residues; sequence IEEEVDDKDDDDEE. Polar residues predominate over residues 171 to 182; that stretch reads NNNIKSPVTTSD. One can recognise an HTH myb-type domain in the interval 193–253; sequence GQRKNRRCWS…HLQKYRLHAR (61 aa). The H-T-H motif DNA-binding region spans 224 to 249; sequence PKQIRDIMKVDGLTNDEVKSHLQKYR.

The protein localises to the nucleus. In terms of biological role, probable factor involved in nitrate and phosphate signaling in roots. Integrates nitrate and phosphate starvation responses and adaptation of root architecture, depending on nutrient availabilities. Acts downstream of the nitrate sensor and transporter NPF6.3/NRT1.1. Represses primary root development in response to phosphate deficiency conditions, only when nitrate is present. The polypeptide is Transcription factor HHO1 (Arabidopsis thaliana (Mouse-ear cress)).